Here is a 151-residue protein sequence, read N- to C-terminus: Lipoprotein signal peptidase (151 aa).

3 consecutive transmembrane segments (helical) span residues 33-53, 58-78, and 87-107; these read VIPDFFHLTYVLNPGAAFGLL, WIFIPAAIIVCAGIIYAQFKI, and LTLGLIGGGALGNLYDRLFIG. Active-site residues include Asp111 and Asp126. Residues 120–140 traverse the membrane as a helical segment; it reads FVFNFADSAIVVGVGLLMILM.

The protein belongs to the peptidase A8 family.

Its subcellular location is the cell membrane. The catalysed reaction is Release of signal peptides from bacterial membrane prolipoproteins. Hydrolyzes -Xaa-Yaa-Zaa-|-(S,diacylglyceryl)Cys-, in which Xaa is hydrophobic (preferably Leu), and Yaa (Ala or Ser) and Zaa (Gly or Ala) have small, neutral side chains.. Its pathway is protein modification; lipoprotein biosynthesis (signal peptide cleavage). Its function is as follows. This protein specifically catalyzes the removal of signal peptides from prolipoproteins. This is Lipoprotein signal peptidase from Desulfitobacterium hafniense (strain DSM 10664 / DCB-2).